We begin with the raw amino-acid sequence, 1393 residues long: MACSIVQFCYFQDLQAARDFLFPHLREEILSGALRRDPSKSTDWEDDGWGAWEENEPQEPEEEGNTCKTQKTSWLQDCVLSLSPTNDLMVIAREQKAVFLVPKWKYSDKGKEEMQFAVGWSGSLNVEEGECVTSALCIPLASQKRSSTGRPDWTCIVVGFTSGYVRFYTENGVLLLAQLLNEDPVLQLKCRTYEIPRHPGVTEQNEELSILYPAAIVTIDGFSLFQSLRACRNQVAKAAASGNENIQPPPLAYKKWGLQDIDTIIDHASVGIMTLSPFDQMKTASNIGGFNAAIKNSPPAMSQYITVGSNPFTGFFYALEGSTQPLLSHVALAVASKLTSALFNAASGWLGWKSKHEEEAVQKQKPKVEPATPLAVRFGLPDSRRHGESICLSPCNTLAAVTDDFGRVILLDVARGIAIRMWKGYRDAQIGWIQTVEDLHERVPEKADFSPFGNSQGPSRVAQFLVIYAPRRGILEVWSTQQGPRVGAFNVGKHCRLLYPGYKIMGLNNVTSQSWQPQTYQICLVDPVSGSVKTVNVPFHLALSDKKSERAKDMHLVKKLAALLKTKSPNLDLVETEIKELILDIKYPATKKQALESILASERLPFSCLRNITQTLMDTLKSQELESVDEGLLQFCANKLKLLQLYESVSQLNSLDFHLDTPFSDNDLALLLRLDEKELLKLQALLEKYKQENTRTNVRFSDDKDGVLPVKTFLEYLEYEKDVLNIKKISEEEYVALGSFFFWKCLHGESSTEDMCHTLESAGLSPQLLLSLLLSVWLSKEKDILDKPQSICCLHTMLSLLSKMKVAIDETWDSQSVSPWWQQMRTACIQSENNGAALLSAHVGHSVAAQISNNMTEKKFSQTVLGADSEALTDSWEALSLDTEYWKLLLKQLEDCLILQTLLHSKGNTQTSKVSSLQAEPLPRLSVKKLLEGGKGGIADSVAKWIFKQDFSPEVLKLANEERDAENPDEPKEGVNRSFLEVSEMEMDLGAIPDLLHLAYEQFPCSLELDVLHAHCCWEYVVQWNKDPEEARFFVRSIEHLKQIFNAHVQNGIALMMWNTFLVKRFSAATYLMDKVGKSPKDRLCRRDVGMSDTAMTSFLGSCLDLLQILMEADVSRDEIQVPVLDTEDAWLSVEGPISIVELALEQKHIHYPLVEHHSILCSILYAVMRFSLKTVKPLSLFDSKGKNAFFKDLTSIQLLPSGEMDPNFISVRQQFLLKVVSAAVQAQHSATKVKDPTEEATPTPFGKDQDWPALAVDLAHHLQVSEDVVRRHYVGELYNYGVDHLGEEAILQVHDKEVLASQLLVLTGQRLAHALLHTQTKEGMELLARLPPTLCTWLKAMDPQDLQNTEVPIATTAKLVNKVIELLPEKHGQYGLALHLIEAVEAISLPSL.

The segment at 36–67 (RDPSKSTDWEDDGWGAWEENEPQEPEEEGNTC) is disordered. Ser-39 bears the Phosphoserine mark. The span at 44–64 (WEDDGWGAWEENEPQEPEEEG) shows a compositional bias: acidic residues. At Ser-450 the chain carries Phosphoserine. Thr-901 carries the post-translational modification Phosphothreonine. 2 positions are modified to phosphoserine: Ser-916 and Ser-978.

Belongs to the Rab3-GAP regulatory subunit family. The Rab3 GTPase-activating complex is a heterodimer composed of RAB3GAP1 and RAB3GAP2. The Rab3 GTPase-activating complex interacts with DMXL2. Interacts with LMAN1. As to expression, ubiquitous.

Its subcellular location is the cytoplasm. The protein resides in the endoplasmic reticulum. Its function is as follows. Regulatory subunit of the Rab3 GTPase-activating (Rab3GAP) complex composed of RAB3GAP1 and RAB3GAP2, which has GTPase-activating protein (GAP) activity towards various Rab3 subfamily members (RAB3A, RAB3B, RAB3C and RAB3D), RAB5A and RAB43, and guanine nucleotide exchange factor (GEF) activity towards RAB18. As part of the Rab3GAP complex, acts as a GAP for Rab3 proteins by converting active RAB3-GTP to the inactive form RAB3-GDP. Rab3 proteins are involved in regulated exocytosis of neurotransmitters and hormones. The Rab3GAP complex acts as a GEF for RAB18 by promoting the conversion of inactive RAB18-GDP to the active form RAB18-GTP. Recruits and stabilizes RAB18 at the cis-Golgi membrane in human fibroblasts where RAB18 is most likely activated. Also involved in RAB18 recruitment at the endoplasmic reticulum (ER) membrane where it maintains proper ER structure. Required for normal eye and brain development. May participate in neurodevelopmental processes such as proliferation, migration and differentiation before synapse formation, and non-synaptic vesicular release of neurotransmitters. The polypeptide is Rab3 GTPase-activating protein non-catalytic subunit (Homo sapiens (Human)).